Here is a 147-residue protein sequence, read N- to C-terminus: Large ribosomal subunit protein uL15 (147 aa).

Positions 1–62 (MDLNTLKPAL…GQMPLQRRLP (62 aa)) are disordered. Residues 30–39 (TATKGHKGQK) are compositionally biased toward basic residues.

Belongs to the universal ribosomal protein uL15 family. As to quaternary structure, part of the 50S ribosomal subunit.

Binds to the 23S rRNA. The protein is Large ribosomal subunit protein uL15 of Pelobacter propionicus (strain DSM 2379 / NBRC 103807 / OttBd1).